A 248-amino-acid chain; its full sequence is Probable transcriptional regulatory protein RPE_4771 (248 aa).

Residues 1 to 21 (MAGHSQFKNIMHRKGRQDAQK) are disordered.

Belongs to the TACO1 family.

It localises to the cytoplasm. This Rhodopseudomonas palustris (strain BisA53) protein is Probable transcriptional regulatory protein RPE_4771.